Here is a 273-residue protein sequence, read N- to C-terminus: Kit ligand (273 aa).

A signal peptide spans 1–25 (MKKTQTWILTCIYLQLLLFNPLVKT). The Extracellular segment spans residues 26–214 (EGICRNRVTN…KNPPGDSSLH (189 aa)). Disulfide bonds link C29-C114 and C68-C163. N-linked (GlcNAc...) asparagine; partial glycans are attached at residues N90 and N118. The N-linked (GlcNAc...) asparagine glycan is linked to N145. S167 carries O-linked (GalNAc...) serine glycosylation. 2 O-linked (GalNAc...) threonine glycosylation sites follow: T168 and T180. The N-linked (GlcNAc...) asparagine glycan is linked to N195. The helical transmembrane segment at 215–237 (WAAMALPALFSLIIGFAFGALYW) threads the bilayer. The Cytoplasmic segment spans residues 238–273 (KKRQPSLTRAVENIQINEEDNEISMLQEKEREFQEV).

Belongs to the SCF family. In terms of assembly, homodimer, non-covalently linked. Heterotetramer with KIT, binding two KIT molecules; thereby mediates KIT dimerization and subsequent activation by autophosphorylation. Post-translationally, a soluble form (sKITLG) is produced by proteolytic processing of isoform 1 in the extracellular domain. In terms of processing, found in two differentially glycosylated forms, LMW-SCF and HMW-SCF. LMW-SCF is fully N-glycosylated at Asn-145, partially N-glycosylated at Asn-90, O-glycosylated at Ser-167, Thr-168 and Thr-180, and not glycosylated at Asn-97 or Asn-118. HMW-SCF is N-glycosylated at Asn-118, Asn-90 and Asn-145, O-glycosylated at Ser-167, Thr-168 and Thr-180, and not glycosylated at Asn-97. A soluble form exists as a cleavage product of the extracellular domain.

It localises to the cell membrane. The protein resides in the cytoplasm. The protein localises to the cytoskeleton. It is found in the cell projection. Its subcellular location is the lamellipodium. It localises to the filopodium. The protein resides in the secreted. In terms of biological role, ligand for the receptor-type protein-tyrosine kinase KIT. Plays an essential role in the regulation of cell survival and proliferation, hematopoiesis, stem cell maintenance, gametogenesis, mast cell development, migration and function, and in melanogenesis. KITLG/SCF binding can activate several signaling pathways. Promotes phosphorylation of PIK3R1, the regulatory subunit of phosphatidylinositol 3-kinase, and subsequent activation of the kinase AKT1. KITLG/SCF and KIT also transmit signals via GRB2 and activation of RAS, RAF1 and the MAP kinases MAPK1/ERK2 and/or MAPK3/ERK1. KITLG/SCF and KIT promote activation of STAT family members STAT1, STAT3 and STAT5. KITLG/SCF and KIT promote activation of PLCG1, leading to the production of the cellular signaling molecules diacylglycerol and inositol 1,4,5-trisphosphate. KITLG/SCF acts synergistically with other cytokines, probably interleukins. The polypeptide is Kit ligand (Homo sapiens (Human)).